We begin with the raw amino-acid sequence, 234 residues long: Sugar fermentation stimulation protein homolog (234 aa).

The protein belongs to the SfsA family.

This Pectobacterium atrosepticum (strain SCRI 1043 / ATCC BAA-672) (Erwinia carotovora subsp. atroseptica) protein is Sugar fermentation stimulation protein homolog.